The following is a 323-amino-acid chain: Beta-ketoacyl-[acyl-carrier-protein] synthase III (323 aa).

Residues Cys112 and His250 contribute to the active site. The segment at 251–255 (QANYR) is ACP-binding. Residue Asn280 is part of the active site.

This sequence belongs to the thiolase-like superfamily. FabH family. Homodimer.

The protein localises to the cytoplasm. The catalysed reaction is malonyl-[ACP] + acetyl-CoA + H(+) = 3-oxobutanoyl-[ACP] + CO2 + CoA. It participates in lipid metabolism; fatty acid biosynthesis. Its function is as follows. Catalyzes the condensation reaction of fatty acid synthesis by the addition to an acyl acceptor of two carbons from malonyl-ACP. Catalyzes the first condensation reaction which initiates fatty acid synthesis and may therefore play a role in governing the total rate of fatty acid production. Possesses both acetoacetyl-ACP synthase and acetyl transacylase activities. Its substrate specificity determines the biosynthesis of branched-chain and/or straight-chain of fatty acids. The polypeptide is Beta-ketoacyl-[acyl-carrier-protein] synthase III (Clostridium beijerinckii (strain ATCC 51743 / NCIMB 8052) (Clostridium acetobutylicum)).